The following is a 137-amino-acid chain: Nuclear transition protein 2 (137 aa).

The segment covering 1-21 (MDTKTQSLPNAHTQPHSNSGP) has biased composition (polar residues). Residues 1 to 137 (MDTKTQSLPN…KRRSSGRKYN (137 aa)) are disordered. Residues H12, H16, H24, C29, C31, C35, and C38 each coordinate Zn(2+). Low complexity predominate over residues 22 to 74 (QSHACNQCSCSHHCQNCSQSCDRSQSCSRSRSSSQSPTGHRSLPGHQSQSLSP). Basic residues predominate over residues 78-91 (PRHRKRAMHSHRCP). The short motif at 110 to 118 (GKANKRKGI) is the Nuclear localization signal element. A compositionally biased stretch (basic residues) spans 126-137 (KTKRRSSGRKYN). S132 is modified (phosphoserine).

Belongs to the nuclear transition protein 2 family. Testis. Expression is restricted to haploid germ cells.

The protein resides in the nucleus. Its subcellular location is the nucleolus. It is found in the chromosome. Plays a key role in the replacement of histones to protamine in the elongating spermatids of mammals. In condensing spermatids, loaded onto the nucleosomes, where it promotes the recruitment and processing of protamines, which are responsible for histone eviction. In Sus scrofa (Pig), this protein is Nuclear transition protein 2 (TNP2).